The chain runs to 252 residues: Cell division protein ZapD (252 aa).

The protein belongs to the ZapD family. Interacts with FtsZ.

The protein resides in the cytoplasm. Its function is as follows. Cell division factor that enhances FtsZ-ring assembly. Directly interacts with FtsZ and promotes bundling of FtsZ protofilaments, with a reduction in FtsZ GTPase activity. The polypeptide is Cell division protein ZapD (Chromobacterium violaceum (strain ATCC 12472 / DSM 30191 / JCM 1249 / CCUG 213 / NBRC 12614 / NCIMB 9131 / NCTC 9757 / MK)).